The following is a 48-amino-acid chain: Small, acid-soluble spore protein P (48 aa).

Basic and acidic residues predominate over residues 1-19 (MTNKNTGKDIRQNSPKEHQ). The disordered stretch occupies residues 1 to 48 (MTNKNTGKDIRQNSPKEHQSGQPEPLSGSKKVKNRNHTRQKHNSHHDM). The span at 30–48 (KKVKNRNHTRQKHNSHHDM) shows a compositional bias: basic residues.

It belongs to the SspP family.

The protein localises to the spore core. The protein is Small, acid-soluble spore protein P of Bacillus pumilus (strain SAFR-032).